A 353-amino-acid polypeptide reads, in one-letter code: S-adenosylmethionine:tRNA ribosyltransferase-isomerase (353 aa).

It belongs to the QueA family. Monomer.

The protein localises to the cytoplasm. The enzyme catalyses 7-aminomethyl-7-carbaguanosine(34) in tRNA + S-adenosyl-L-methionine = epoxyqueuosine(34) in tRNA + adenine + L-methionine + 2 H(+). Its pathway is tRNA modification; tRNA-queuosine biosynthesis. Transfers and isomerizes the ribose moiety from AdoMet to the 7-aminomethyl group of 7-deazaguanine (preQ1-tRNA) to give epoxyqueuosine (oQ-tRNA). The polypeptide is S-adenosylmethionine:tRNA ribosyltransferase-isomerase (Blochmanniella floridana).